The chain runs to 246 residues: Orotidine 5'-phosphate decarboxylase (246 aa).

Residues Asp22, Lys44, 71 to 80 (DLKYHDIPHT), Thr130, Arg191, Gln201, Gly221, and Arg222 contribute to the substrate site. The active-site Proton donor is Lys73.

It belongs to the OMP decarboxylase family. Type 1 subfamily. In terms of assembly, homodimer.

The catalysed reaction is orotidine 5'-phosphate + H(+) = UMP + CO2. Its pathway is pyrimidine metabolism; UMP biosynthesis via de novo pathway; UMP from orotate: step 2/2. Its function is as follows. Catalyzes the decarboxylation of orotidine 5'-monophosphate (OMP) to uridine 5'-monophosphate (UMP). This Neisseria meningitidis serogroup C (strain 053442) protein is Orotidine 5'-phosphate decarboxylase.